The following is an 860-amino-acid chain: Alanine--tRNA ligase (860 aa).

Residues His-563, His-567, Cys-665, and His-669 each coordinate Zn(2+).

The protein belongs to the class-II aminoacyl-tRNA synthetase family. The cofactor is Zn(2+).

The protein localises to the cytoplasm. It catalyses the reaction tRNA(Ala) + L-alanine + ATP = L-alanyl-tRNA(Ala) + AMP + diphosphate. Functionally, catalyzes the attachment of alanine to tRNA(Ala) in a two-step reaction: alanine is first activated by ATP to form Ala-AMP and then transferred to the acceptor end of tRNA(Ala). Also edits incorrectly charged Ser-tRNA(Ala) and Gly-tRNA(Ala) via its editing domain. The chain is Alanine--tRNA ligase from Vibrio cholerae serotype O1 (strain ATCC 39541 / Classical Ogawa 395 / O395).